We begin with the raw amino-acid sequence, 137 residues long: MLQPSRRKYRKEQKGRNTGIATRGAKVSFGEFGLKAIGRGRLTARQIESARRAMTRHIKRGGRIWIRIFPDKPISKKPAEVRMGNGKGNPEYWVAEIQPGKVLYEMDGVDETLAREAFRLAAAKLPLETVFVHRQMG.

The protein belongs to the universal ribosomal protein uL16 family. In terms of assembly, part of the 50S ribosomal subunit.

Its function is as follows. Binds 23S rRNA and is also seen to make contacts with the A and possibly P site tRNAs. This is Large ribosomal subunit protein uL16 from Aromatoleum aromaticum (strain DSM 19018 / LMG 30748 / EbN1) (Azoarcus sp. (strain EbN1)).